Reading from the N-terminus, the 359-residue chain is UDP-N-acetylglucosamine--N-acetylmuramyl-(pentapeptide) pyrophosphoryl-undecaprenol N-acetylglucosamine transferase (359 aa).

Residues 14-16 (TGG), Asn-126, Arg-166, Ser-194, Ile-248, and Gln-293 contribute to the UDP-N-acetyl-alpha-D-glucosamine site.

It belongs to the glycosyltransferase 28 family. MurG subfamily.

It is found in the cell inner membrane. It catalyses the reaction di-trans,octa-cis-undecaprenyl diphospho-N-acetyl-alpha-D-muramoyl-L-alanyl-D-glutamyl-meso-2,6-diaminopimeloyl-D-alanyl-D-alanine + UDP-N-acetyl-alpha-D-glucosamine = di-trans,octa-cis-undecaprenyl diphospho-[N-acetyl-alpha-D-glucosaminyl-(1-&gt;4)]-N-acetyl-alpha-D-muramoyl-L-alanyl-D-glutamyl-meso-2,6-diaminopimeloyl-D-alanyl-D-alanine + UDP + H(+). Its pathway is cell wall biogenesis; peptidoglycan biosynthesis. In terms of biological role, cell wall formation. Catalyzes the transfer of a GlcNAc subunit on undecaprenyl-pyrophosphoryl-MurNAc-pentapeptide (lipid intermediate I) to form undecaprenyl-pyrophosphoryl-MurNAc-(pentapeptide)GlcNAc (lipid intermediate II). This Verminephrobacter eiseniae (strain EF01-2) protein is UDP-N-acetylglucosamine--N-acetylmuramyl-(pentapeptide) pyrophosphoryl-undecaprenol N-acetylglucosamine transferase.